Consider the following 988-residue polypeptide: Next to BRCA1 gene 1 protein (988 aa).

Residues 4–86 (QVTLNVTFKN…NQLQMQVHEG (83 aa)) form the PB1 domain. S117 carries the phosphoserine modification. Residues 126 to 150 (MKTTEEPAPEQCSSAPCDTDQPQDK) are disordered. The ZZ-type zinc finger occupies 213-265 (SWHIACSHCQKRIVGVRYQCSLCPSYNICEDCEAGPYTHDTNHVLLKLRRPVV). Residues C218, C221, C232, C235, C241, C244, H251, and H255 each contribute to the Zn(2+) site. 2 ATG8 family proteins-binding regions span residues 543–637 (ASER…PASV) and 745–756 (ASSEDYIIILPE). Residue T587 is modified to Phosphothreonine. 3 positions are modified to phosphoserine: S591, S597, and S626. The tract at residues 611 to 644 (ESEGAGFKAPPDSTVSAKRKAETPASVEETEEDL) is disordered. Disordered stretches follow at residues 768–822 (MYSS…TSQP) and 841–900 (RSAP…HHNG). Basic and acidic residues predominate over residues 795-807 (TEARERLPERESQ). Polar residues predominate over residues 808 to 822 (PQEQSISDILTTSQP). S860 is modified (phosphoserine). The UBA domain maps to 935-979 (SEDQTTALMAHLFEMGFCDRQLNLRLLRKHNYNILQVVTELLQVN).

Homooligomer and heterooligomer. Interacts with TRIM55. Interacts with titin/TTN. Interacts with RNF29, USP8, MAP1LC3A, MAP1LC3B, MAP1LC3C, GABARAP, GABARAPL1 and GABARAPL2. Binds to ubiquitin and ubiquitinated proteins. Interacts with SQSTM1. Interacts with TAX1BP1. Interacts with IRF3; this interaction mediates autophagic degradation of IRF3. Interacts with IL12A and IL12B. In terms of processing, phosphorylated by GSK3A; this phosphorylation inhibits NBR1 involvement in the formation of ubiquitinated protein aggregates. As to expression, expressed in brain.

The protein localises to the cytoplasm. It localises to the cytoplasmic vesicle. The protein resides in the autophagosome. Its subcellular location is the lysosome. It is found in the myofibril. The protein localises to the sarcomere. It localises to the m line. Ubiquitin-binding autophagy adapter that participates in different processes including host defense or intracellular homeostasis. Possesses a double function during the selective autophagy by acting as a shuttle bringing ubiquitinated proteins to autophagosomes and also by participating in the formation of protein aggregates. Plays a role in the regulation of the innate immune response by modulating type I interferon production and targeting ubiquitinated IRF3 for autophagic degradation. In response to oxidative stress, promotes an increase in SQSTM1 levels, phosphorylation, and body formation by preventing its autophagic degradation. In turn, activates the KEAP1-NRF2/NFE2L2 antioxidant pathway. Also plays non-autophagy role by mediating the shuttle of IL-12 to late endosome for subsequent secretion. The protein is Next to BRCA1 gene 1 protein (Nbr1) of Mus musculus (Mouse).